The primary structure comprises 353 residues: Photosystem II protein D1 (353 aa).

N-acetylthreonine is present on T2. T2 is modified (phosphothreonine). 3 helical membrane passes run 29 to 46, 118 to 133, and 142 to 156; these read YIGW…TATS, HFLL…EWEL, and WIAV…AATA. H118 serves as a coordination point for chlorophyll a. Y126 contributes to the pheophytin a binding site. Residues D170 and E189 each coordinate [CaMn4O5] cluster. A helical transmembrane segment spans residues 197–218; it reads FHMLGVAGVFGGSLFSAMHGSL. Residue H198 coordinates chlorophyll a. Residues H215 and 264–265 each bind a quinone; that span reads SF. H215 provides a ligand contact to Fe cation. A Fe cation-binding site is contributed by H272. The chain crosses the membrane as a helical span at residues 274–288; sequence FLTAWPVVGIWFTAL. 4 residues coordinate [CaMn4O5] cluster: H332, E333, D342, and A344. A propeptide spanning residues 345–353 is cleaved from the precursor; sequence VVEAPSTNG.

The protein belongs to the reaction center PufL/M/PsbA/D family. In terms of assembly, PSII is composed of 1 copy each of membrane proteins PsbA, PsbB, PsbC, PsbD, PsbE, PsbF, PsbH, PsbI, PsbJ, PsbK, PsbL, PsbM, PsbT, PsbX, PsbY, PsbZ, Psb30/Ycf12, at least 3 peripheral proteins of the oxygen-evolving complex and a large number of cofactors. It forms dimeric complexes. The D1/D2 heterodimer binds P680, chlorophylls that are the primary electron donor of PSII, and subsequent electron acceptors. It shares a non-heme iron and each subunit binds pheophytin, quinone, additional chlorophylls, carotenoids and lipids. D1 provides most of the ligands for the Mn4-Ca-O5 cluster of the oxygen-evolving complex (OEC). There is also a Cl(-1) ion associated with D1 and D2, which is required for oxygen evolution. The PSII complex binds additional chlorophylls, carotenoids and specific lipids. serves as cofactor. Post-translationally, tyr-161 forms a radical intermediate that is referred to as redox-active TyrZ, YZ or Y-Z. C-terminally processed by CTPA; processing is essential to allow assembly of the oxygen-evolving complex and thus photosynthetic growth.

It localises to the plastid. The protein localises to the chloroplast thylakoid membrane. It catalyses the reaction 2 a plastoquinone + 4 hnu + 2 H2O = 2 a plastoquinol + O2. Functionally, photosystem II (PSII) is a light-driven water:plastoquinone oxidoreductase that uses light energy to abstract electrons from H(2)O, generating O(2) and a proton gradient subsequently used for ATP formation. It consists of a core antenna complex that captures photons, and an electron transfer chain that converts photonic excitation into a charge separation. The D1/D2 (PsbA/PsbD) reaction center heterodimer binds P680, the primary electron donor of PSII as well as several subsequent electron acceptors. The sequence is that of Photosystem II protein D1 from Aethionema cordifolium (Lebanon stonecress).